The chain runs to 3284 residues: Location of vulva defective 1 (3284 aa).

The first 21 residues, 1–21 (MKKSNFFVLLLLAISAIQIDG), serve as a signal peptide directing secretion. Disordered regions lie at residues 226–326 (ESTS…ITST), 350–505 (TTML…GTNP), 623–702 (VASS…ADST), 827–926 (STSE…ASTE), and 1043–1216 (TTTE…SLAT). Low complexity-rich tracts occupy residues 227-326 (STST…ITST) and 350-500 (TTML…TTSS). Residues 827–913 (STSEVTSTTS…PSDSSSASDS (87 aa)) are compositionally biased toward low complexity. Positions 914 to 926 (MRTTTVDPDASTE) are enriched in polar residues. Residues 1043-1057 (TTTETPPTTVSSSDD) are compositionally biased toward low complexity. Gly residues predominate over residues 1060–1078 (GKTGGTGATGGTGGTGSGG). Positions 1079 to 1104 (SATTLSTGDAVRSTTSGSGSGQSSTG) are enriched in low complexity. Positions 1105–1127 (SGAGGSGTTASGSGSGGSSGTGS) are enriched in gly residues. Positions 1128–1138 (DGVNSGKTTAL) are enriched in polar residues. A compositionally biased stretch (low complexity) spans 1163–1192 (GSGSDSNGSSGVSTKSSSGSDTSGSSDSSG). Positions 1197 to 1216 (FSATAQPSTRTTKTRSSLAT) are enriched in polar residues. Positions 2064-2227 (WNNSLQVEII…SVGAFNPTID (164 aa)) constitute a GAIN-B domain. An intrachain disulfide couples cysteine 2181 to cysteine 2209. Residues 2181–2227 (CYFYQKTSDVFNSEGMYPSDGQGMQFVNCSTDHLTMFSVGAFNPTID) form a GPS region. Residues 2245 to 2265 (VMIAAVFMLVVYGCLTINAII) traverse the membrane as a helical segment. One can recognise a PLAT domain in the interval 2288–2411 (YMYVIAVETG…GDGETERLAR (124 aa)). Transmembrane regions (helical) follow at residues 2453–2473 (DYSV…ITIL), 2496–2516 (IAFG…HILL), 2557–2577 (IIVF…MSLM), 2592–2612 (LILW…FLIL), 2672–2692 (LFIT…MVML), 2945–2965 (MLYI…YLYG), 2994–3014 (WNFM…AYTI), 3043–3063 (WEIV…CKMI), 3089–3109 (FGIA…AVLG), and 3144–3164 (FAFV…LQLY).

The protein belongs to the polycystin family. In terms of assembly, interacts (via PLAT domain) with atp-2 (via N-terminus) and with kin-10 (via C-terminus). Interacts (via C-terminus) with isoform a of stam-1/pqn-19 (via C-terminus). Autoproteolytically processed at the GPS region of the GAIN-B domain; this cleavage modulates receptor activity. In terms of tissue distribution, exclusively expressed in a subset of three categories of adult male sensory neurons: ray neurons, hook neurons and head cephalic (CEM) neurons.

It localises to the membrane. The protein localises to the cell projection. It is found in the cilium. Required for two aspects of male mating behavior: response to hermaphrodite contact and vulva location. Acts in the same pathway as pkd-2 and atp-2 in response behavior. May be required for ciliary targeting of pkd-2. In Caenorhabditis elegans, this protein is Location of vulva defective 1 (lov-1).